The chain runs to 336 residues: MQKHYTVAWFLYSAPGVDPSPPCRSLGWKRKREWSDESEEEPEKELAPEPEETWVVETLCGLKMKLKQQRVSPILLEHHKDFNSQLAPGVDPSPPHRSFCWKRKMEWWDKSEESEEEPRKVLAPEPEEIWVAEMLCGLKMKLKRRRVSLVLPEHHEAFNRLLEDPVIKRFLAWDKDLRVSDKYLLAMVIAYFSRAGFPSWQYQRLHFFLALYLANDMEEDDEDSKQNIFHFLYGKNRSRIPLLRKRRFQLYRSMNPRARKNRSHIPLVRKRRFQLRRCMNPRARKNRSQIVLFQKRRFHFFCSMSCRAWVSPEELEEIQAYDPEHWVWARDRARLS.

The interval 16–50 (GVDPSPPCRSLGWKRKREWSDESEEEPEKELAPEP) is disordered. Positions 36–50 (DESEEEPEKELAPEP) are enriched in acidic residues.

The protein belongs to the Speedy/Ringo family. In terms of tissue distribution, predominantly expressed in testis and heart.

This is Speedy protein E1 from Homo sapiens (Human).